The chain runs to 393 residues: Purine permease 14 (393 aa).

Ala-2 is modified (N-acetylalanine). 10 helical membrane passes run 46–66 (WPTI…AKLL), 90–110 (TQSL…LIFI), 133–153 (LAVI…LAAM), 161–181 (GVFT…AAFI), 189–209 (WVVI…SSSF), 225–245 (WAAL…QNVF), 268–288 (VIIF…LIAG), 308–328 (VMAM…IVGL), 339–359 (VISV…FNFM), and 363–383 (FDAF…AYFF).

This sequence belongs to the purine permeases (TC 2.A.7.14) family. In terms of tissue distribution, expressed in seedlings, leaves, embryos, ovules, seeds and the root and shoot meristems. In heart-stage embryos, detected in cells that failed to respond to cytokinins, including the prospective cotyledons.

Its subcellular location is the cell membrane. Its function is as follows. Purine permease implicated in ATP-dependent cytokinin translocation that controls the spatiotemporal landscape of cytokinin signaling. Depletes ligands from the apoplast, which leads to a suppression of the cytokinin response. This chain is Purine permease 14, found in Arabidopsis thaliana (Mouse-ear cress).